The chain runs to 93 residues: Aspartyl/glutamyl-tRNA(Asn/Gln) amidotransferase subunit C (93 aa).

Belongs to the GatC family. As to quaternary structure, heterotrimer of A, B and C subunits.

It carries out the reaction L-glutamyl-tRNA(Gln) + L-glutamine + ATP + H2O = L-glutaminyl-tRNA(Gln) + L-glutamate + ADP + phosphate + H(+). It catalyses the reaction L-aspartyl-tRNA(Asn) + L-glutamine + ATP + H2O = L-asparaginyl-tRNA(Asn) + L-glutamate + ADP + phosphate + 2 H(+). Functionally, allows the formation of correctly charged Asn-tRNA(Asn) or Gln-tRNA(Gln) through the transamidation of misacylated Asp-tRNA(Asn) or Glu-tRNA(Gln) in organisms which lack either or both of asparaginyl-tRNA or glutaminyl-tRNA synthetases. The reaction takes place in the presence of glutamine and ATP through an activated phospho-Asp-tRNA(Asn) or phospho-Glu-tRNA(Gln). In Rubrobacter xylanophilus (strain DSM 9941 / JCM 11954 / NBRC 16129 / PRD-1), this protein is Aspartyl/glutamyl-tRNA(Asn/Gln) amidotransferase subunit C.